Here is a 1858-residue protein sequence, read N- to C-terminus: Inactive histone-lysine N-methyltransferase 2E (1858 aa).

Residues 63 to 66 (DHNY) carry the HCFC1-binding motif (HBM) motif. A PHD-type zinc finger spans residues 118–166 (VTRCICGFTHDDGYMICCDKCSVWQHIDCMGIDRQHIPDTYLCERCQPR). Zn(2+)-binding residues include C121, C123, C135, C138, H143, C146, C160, and C163. Positions 217 to 269 (ASRVSKVNDKRRKKSGEKEQHISKCKKAFREGSRKSSRVKGSAPEIDPSSDGS) are disordered. Positions 232-250 (GEKEQHISKCKKAFREGSR) are enriched in basic and acidic residues. Residues 330-447 (PPVESHIQKN…KGTEITIAFD (118 aa)) enclose the SET domain. S435 is a glycosylation site (O-linked (GlcNAc) serine). Residue T440 is glycosylated (O-linked (GlcNAc) threonine). Residues 475-530 (SESMENINSGYETRRKKGKKDKDISKEKDTQNQNITLDCEGTTNKMKSPETKQRKL) form a disordered region. The span at 494–504 (KDKDISKEKDT) shows a compositional bias: basic and acidic residues. The segment covering 505–520 (QNQNITLDCEGTTNKM) has biased composition (polar residues). Residues 559–615 (VEMESEEQIAERKRKMTREERKMEAILQAFARLEKREKRREQALERISTAKTEVKTE) are a coiled coil. S623 bears the Phosphoserine mark. A disordered region spans residues 630–687 (EQAKEENASKPTPAKVNRTKQRKSFSRSRTHIGQQRRRHRTVSMCSDIQPSSPDIEVT). Positions 646 to 670 (NRTKQRKSFSRSRTHIGQQRRRHRT) are enriched in basic residues. Residues 672–687 (SMCSDIQPSSPDIEVT) are compositionally biased toward polar residues. Phosphoserine occurs at positions 837 and 845. Composition is skewed to low complexity over residues 887–901 (TSTPTPSPYATPTHT) and 933–957 (PVTPVTPGTPGNTMHFENISSPESS). Disordered stretches follow at residues 887 to 960 (TSTP…SPEI) and 1039 to 1068 (LETPAHDRAEPNSQLDSTHSGRGTMYSSWV). Basic and acidic residues predominate over residues 1039 to 1048 (LETPAHDRAE). A compositionally biased stretch (polar residues) spans 1049–1068 (PNSQLDSTHSGRGTMYSSWV). Residue S1070 is modified to Phosphoserine. Disordered regions lie at residues 1164 to 1561 (KRQR…QNQQ) and 1581 to 1835 (VFTS…PVPG). Polar residues-rich tracts occupy residues 1186–1206 (PHASGSLSNNGDGCASSNDNG) and 1222–1235 (TVYNATSEETSNNC). Phosphoserine is present on S1273. Residues 1273–1282 (SDHRKDKDSG) are compositionally biased toward basic and acidic residues. Composition is skewed to low complexity over residues 1285-1303 (SPCVSCSPSHVQSSPSSHS) and 1349-1362 (KSPPKMSKPGSPGS). A Phosphoserine modification is found at S1359. 2 stretches are compositionally biased toward polar residues: residues 1400–1432 (QQKQLSNNNQALSKNHPPQTHVRNSSEQLSQKL) and 1506–1542 (LPANTQQATSGTLFTQTPSGQSSATYSQFNQQSLNST). Residues 1543–1553 (APPPPPPPPPS) show a composition bias toward pro residues. Over residues 1581 to 1599 (VFTSGPNQALPGTTSQQTV) the composition is skewed to polar residues. Over residues 1626 to 1637 (VPPPPPPPPAPG) the composition is skewed to pro residues. A compositionally biased stretch (polar residues) spans 1642–1651 (QQPNSHQQHS). Residues 1677–1687 (LPPPPPPPGPA) are compositionally biased toward pro residues. Over residues 1698 to 1711 (TGLQGLQAQHQHVV) the composition is skewed to polar residues. Positions 1714–1724 (APPPPPPPPPS) are enriched in pro residues. The span at 1798-1808 (QGPNSIPTPTA) shows a compositional bias: polar residues.

This sequence belongs to the class V-like SAM-binding methyltransferase superfamily. Histone-lysine methyltransferase family. TRX/MLL subfamily. As to quaternary structure, component of a complex composed of KMT2E (isoform 3), OGT and USP7; the complex stabilizes KMT2E, preventing KMT2E ubiquitination and proteasomal-mediated degradation. Isoform 3 interacts (via N-terminus) with OGT (via TRP repeats). Isoform 3 interacts with deubiquitinating enzyme USP7 (via MATH domain). Isoform 3 interacts (via HBM motif) with HCFC1 (via Kelch domain). Isoform 3 interacts with E2F1; the interaction is probably indirect and is mediated via HCFC1. In terms of processing, ubiquitinated. Deubiquitinated by USP7. O-glycosylated at Ser-435 and Thr-440 in the SET domain by OGT which probably prevents KMT2E proteasomal-mediated degradation. In terms of tissue distribution, widely expressed in both adult and fetal tissues. Highest levels of expression observed in fetal thymus and kidney and in adult hematopoietic tissues, jejunum and cerebellum. Isoform NKp44L: Not detected on circulating cells from healthy individuals, but is expressed on a large panel of tumor and transformed cells.

It is found in the chromosome. The protein localises to the cytoplasm. It localises to the cytoskeleton. Its subcellular location is the microtubule organizing center. The protein resides in the centrosome. It is found in the nucleus speckle. The protein localises to the nucleus. It localises to the nucleoplasm. Its subcellular location is the cell membrane. Associates with chromatin regions downstream of transcriptional start sites of active genes and thus regulates gene transcription. Chromatin interaction is mediated via the binding to tri-methylated histone H3 at 'Lys-4' (H3K4me3). Key regulator of hematopoiesis involved in terminal myeloid differentiation and in the regulation of hematopoietic stem cell (HSCs) self-renewal by a mechanism that involves DNA methylation. Also acts as an important cell cycle regulator, participating in cell cycle regulatory network machinery at multiple cell cycle stages including G1/S transition, S phase progression and mitotic entry. Recruited to E2F1 responsive promoters by HCFC1 where it stimulates tri-methylation of histone H3 at 'Lys-4' and transcriptional activation and thereby facilitates G1 to S phase transition. During myoblast differentiation, required to suppress inappropriate expression of S-phase-promoting genes and maintain expression of determination genes in quiescent cells. In terms of biological role, cellular ligand for NCR2/NKp44, may play a role as a danger signal in cytotoxicity and NK-cell-mediated innate immunity. This Homo sapiens (Human) protein is Inactive histone-lysine N-methyltransferase 2E (KMT2E).